The following is a 102-amino-acid chain: uncharacterized protein (102 aa).

2 helical membrane passes run 38–58 and 64–84; these read FYVWSSRIYVLVLVVQAQLIL and VLFLLLFFLHNFFLLPQLFQF.

Its subcellular location is the membrane. This is an uncharacterized protein from Saccharomyces cerevisiae (strain ATCC 204508 / S288c) (Baker's yeast).